The chain runs to 266 residues: Glutamate racemase (266 aa).

Residues 7–8 and 39–40 contribute to the substrate site; these read DS and YG. C70 serves as the catalytic Proton donor/acceptor. Residue 71–72 coordinates substrate; the sequence is NT. Catalysis depends on C186, which acts as the Proton donor/acceptor. 187-188 serves as a coordination point for substrate; sequence TH.

The protein belongs to the aspartate/glutamate racemases family.

It carries out the reaction L-glutamate = D-glutamate. It participates in cell wall biogenesis; peptidoglycan biosynthesis. Its function is as follows. Provides the (R)-glutamate required for cell wall biosynthesis. The protein is Glutamate racemase of Campylobacter curvus (strain 525.92).